The following is a 300-amino-acid chain: Bifunctional protein FolD 2 (300 aa).

Residues 165 to 167 (GRS), Ser-190, and Ile-231 each bind NADP(+).

This sequence belongs to the tetrahydrofolate dehydrogenase/cyclohydrolase family. Homodimer.

The enzyme catalyses (6R)-5,10-methylene-5,6,7,8-tetrahydrofolate + NADP(+) = (6R)-5,10-methenyltetrahydrofolate + NADPH. It carries out the reaction (6R)-5,10-methenyltetrahydrofolate + H2O = (6R)-10-formyltetrahydrofolate + H(+). It functions in the pathway one-carbon metabolism; tetrahydrofolate interconversion. Functionally, catalyzes the oxidation of 5,10-methylenetetrahydrofolate to 5,10-methenyltetrahydrofolate and then the hydrolysis of 5,10-methenyltetrahydrofolate to 10-formyltetrahydrofolate. The polypeptide is Bifunctional protein FolD 2 (Pseudomonas syringae pv. syringae (strain B728a)).